An 843-amino-acid chain; its full sequence is General transcription and DNA repair factor IIH helicase/translocase subunit XPB/SSL2 (843 aa).

The interval 1–85 (MTDVEGYQPK…TAADSSMNQM (85 aa)) is disordered. Residues 26–41 (SDEDSPATDAEIDENY) show a composition bias toward acidic residues. Over residues 42–56 (DDNRETSEGRGERDT) the composition is skewed to basic and acidic residues. Positions 64 to 74 (KKPRKKTKSSR) are enriched in basic residues. A Nuclear localization signal motif is present at residues 64–75 (KKPRKKTKSSRH). Residues 373–535 (MFGNGRARSG…DLNFLIGPKL (163 aa)) enclose the Helicase ATP-binding domain. 386–393 (LPCGAGKT) contributes to the ATP binding site. A DEAH box motif is present at residues 488–491 (DEVH). In terms of domain architecture, Helicase C-terminal spans 589-743 (QACQFLIQYH…KVITHLHGME (155 aa)). Position 752 is a phosphoserine (S752).

It belongs to the helicase family. RAD25/XPB subfamily. Component of the 7-subunit TFIIH core complex composed of XPB/SSL2, XPD/RAD3, SSL1, TFB1, TFB2, TFB4 and TFB5, which is active in NER. The core complex associates with the 3-subunit CTD-kinase module TFIIK composed of CCL1, KIN28 and TFB3 to form the 10-subunit holoenzyme (holo-TFIIH) active in transcription. An additionnal subunit, TFB6, plays a role in the dissociation of the SSL2 helicase from TFIIH after transcription initiation. Interacts directly with TFB6. Mg(2+) is required as a cofactor.

Its subcellular location is the nucleus. It catalyses the reaction Couples ATP hydrolysis with the unwinding of duplex DNA by translocating in the 3'-5' direction.. It carries out the reaction ATP + H2O = ADP + phosphate + H(+). ATP-dependent DNA translocase. Component of the general transcription and DNA repair factor IIH (TFIIH) core complex. When complexed to CDK-activating kinase (CAK), involved in RNA transcription by RNA polymerase II. May have 3'-5' helicase activity alone, the TFIIH core however has no 3'-5' helicase activity. Also involved in transcription-coupled nucleotide excision repair (NER) of damaged DNA. In NER, TFIIH acts by opening DNA around the lesion to allow the excision of the damaged oligonucleotide and its replacement by a new DNA fragment. The ATPase activity of XPB/SSL2, but not its helicase activity, is required for DNA opening. In transcription, TFIIH has an essential role in transcription initiation. When the pre-initiation complex (PIC) has been established, TFIIH is required for promoter opening and promoter escape. The ATP-dependent helicase activity of XPB/SSL2 is required for promoter opening and promoter escape. XPB/SSL2 acts as a double-stranded DNA translocase, promoting DNA opening by tracking in a 5'-3' dirction along the nontemplate promoter strand, rotating and inserting DNA into the Pol II active site cleft, leading to DNA unwinding. A dsDNA-stimulated ATPase, dATP and ATP are equally good substrates. May also use this translocase mechanism during DNA repair rather than physically wedging open damaged DNA. The chain is General transcription and DNA repair factor IIH helicase/translocase subunit XPB/SSL2 from Saccharomyces cerevisiae (strain ATCC 204508 / S288c) (Baker's yeast).